Reading from the N-terminus, the 252-residue chain is Large ribosomal subunit protein uL29m (252 aa).

Lysine 146 is modified (N6-acetyllysine). Over residues lysine 230 to phenylalanine 240 the composition is skewed to basic residues. The disordered stretch occupies residues lysine 230–valine 252.

The protein belongs to the universal ribosomal protein uL29 family. As to quaternary structure, component of the mitochondrial ribosome large subunit (39S) which comprises a 16S rRNA and about 50 distinct proteins.

The protein localises to the mitochondrion. The sequence is that of Large ribosomal subunit protein uL29m (Mrpl47) from Mus musculus (Mouse).